The primary structure comprises 30 residues: Thylakoid lumenal 13.3 kDa protein (30 aa).

The protein resides in the plastid. It localises to the chloroplast thylakoid lumen. The protein is Thylakoid lumenal 13.3 kDa protein of Spinacia oleracea (Spinach).